We begin with the raw amino-acid sequence, 172 residues long: Ribosome maturation factor RimM (172 aa).

Residues 96 to 168 form the PRC barrel domain; that stretch reads DGEFYYHEII…RIEVELMEGL (73 aa).

This sequence belongs to the RimM family. In terms of assembly, binds ribosomal protein uS19.

The protein localises to the cytoplasm. Its function is as follows. An accessory protein needed during the final step in the assembly of 30S ribosomal subunit, possibly for assembly of the head region. Essential for efficient processing of 16S rRNA. May be needed both before and after RbfA during the maturation of 16S rRNA. It has affinity for free ribosomal 30S subunits but not for 70S ribosomes. This is Ribosome maturation factor RimM from Streptococcus thermophilus (strain CNRZ 1066).